A 692-amino-acid chain; its full sequence is Single-strand DNA endonuclease ASTE1 (692 aa).

This sequence belongs to the asteroid family.

Its function is as follows. Structure-specific DNA endonuclease that specifically cleaves single-stranded DNA and 3' overhang DNA. In Danio rerio (Zebrafish), this protein is Single-strand DNA endonuclease ASTE1 (aste1a).